Reading from the N-terminus, the 326-residue chain is N-acetyl-gamma-glutamyl-phosphate reductase (326 aa).

Residue Cys155 is part of the active site.

Belongs to the NAGSA dehydrogenase family. Type 1 subfamily.

The protein localises to the cytoplasm. It catalyses the reaction N-acetyl-L-glutamate 5-semialdehyde + phosphate + NADP(+) = N-acetyl-L-glutamyl 5-phosphate + NADPH + H(+). It participates in amino-acid biosynthesis; L-arginine biosynthesis; N(2)-acetyl-L-ornithine from L-glutamate: step 3/4. In terms of biological role, catalyzes the NADPH-dependent reduction of N-acetyl-5-glutamyl phosphate to yield N-acetyl-L-glutamate 5-semialdehyde. This Shewanella sp. (strain MR-4) protein is N-acetyl-gamma-glutamyl-phosphate reductase.